Here is a 163-residue protein sequence, read N- to C-terminus: Nucleotide-binding protein AM1_1863 (163 aa).

Belongs to the YajQ family.

Nucleotide-binding protein. The protein is Nucleotide-binding protein AM1_1863 of Acaryochloris marina (strain MBIC 11017).